Here is a 364-residue protein sequence, read N- to C-terminus: DNA polymerase IV (364 aa).

One can recognise a UmuC domain in the interval 14-198 (IIHIDMDAFF…LPIEKFHGVG (185 aa)). Mg(2+) contacts are provided by Asp18 and Asp116. Residue Glu117 is part of the active site.

The protein belongs to the DNA polymerase type-Y family. As to quaternary structure, monomer. It depends on Mg(2+) as a cofactor.

It is found in the cytoplasm. The catalysed reaction is DNA(n) + a 2'-deoxyribonucleoside 5'-triphosphate = DNA(n+1) + diphosphate. Functionally, poorly processive, error-prone DNA polymerase involved in untargeted mutagenesis. Copies undamaged DNA at stalled replication forks, which arise in vivo from mismatched or misaligned primer ends. These misaligned primers can be extended by PolIV. Exhibits no 3'-5' exonuclease (proofreading) activity. May be involved in translesional synthesis, in conjunction with the beta clamp from PolIII. This Streptococcus pyogenes serotype M28 (strain MGAS6180) protein is DNA polymerase IV.